A 309-amino-acid chain; its full sequence is Homoserine kinase (309 aa).

An ATP-binding site is contributed by 91–101 (PLARGLGSSAA).

It belongs to the GHMP kinase family. Homoserine kinase subfamily.

It localises to the cytoplasm. It catalyses the reaction L-homoserine + ATP = O-phospho-L-homoserine + ADP + H(+). It participates in amino-acid biosynthesis; L-threonine biosynthesis; L-threonine from L-aspartate: step 4/5. Functionally, catalyzes the ATP-dependent phosphorylation of L-homoserine to L-homoserine phosphate. This is Homoserine kinase from Bacillus velezensis (strain DSM 23117 / BGSC 10A6 / LMG 26770 / FZB42) (Bacillus amyloliquefaciens subsp. plantarum).